The sequence spans 260 residues: 14-3-3-like protein C (260 aa).

It belongs to the 14-3-3 family.

In Nicotiana tabacum (Common tobacco), this protein is 14-3-3-like protein C.